The following is a 500-amino-acid chain: Intracellular exo-alpha-(1-&gt;5)-L-arabinofuranosidase (500 aa).

3 residues coordinate alpha-L-arabinofuranose: Glu28, Asn73, and Asn173. Glu174 acts as the Proton donor/acceptor in catalysis. 3 residues coordinate alpha-L-arabinofuranose: Tyr245, Glu293, and Gln350. Glu293 serves as the catalytic Nucleophile.

The protein belongs to the glycosyl hydrolase 51 family. As to quaternary structure, homohexamer; trimer of dimers.

The protein localises to the cytoplasm. It catalyses the reaction Hydrolysis of terminal non-reducing alpha-L-arabinofuranoside residues in alpha-L-arabinosides.. It functions in the pathway glycan metabolism; L-arabinan degradation. In terms of biological role, involved in the degradation of arabinan and is a key enzyme in the complete degradation of the plant cell wall. Catalyzes the cleavage of terminal alpha-(1-&gt;5)-arabinofuranosyl bonds in different hemicellulosic homopolysaccharides (branched and debranched arabinans). In Halalkalibacterium halodurans (strain ATCC BAA-125 / DSM 18197 / FERM 7344 / JCM 9153 / C-125) (Bacillus halodurans), this protein is Intracellular exo-alpha-(1-&gt;5)-L-arabinofuranosidase (abfA).